A 360-amino-acid chain; its full sequence is A-type ATP synthase subunit C (360 aa).

The interval 1–25 (MRLLEKLWGQKPSRKSDKKKNGTSN) is disordered.

The protein belongs to the V-ATPase V0D/AC39 subunit family. In terms of assembly, has multiple subunits with at least A(3), B(3), C, D, E, F, H, I and proteolipid K(x).

Its subcellular location is the cell membrane. Functionally, component of the A-type ATP synthase that produces ATP from ADP in the presence of a proton gradient across the membrane. The sequence is that of A-type ATP synthase subunit C from Methanosarcina barkeri (strain Fusaro / DSM 804).